Reading from the N-terminus, the 184-residue chain is Phosphopantetheine adenylyltransferase (184 aa).

Ser8 serves as a coordination point for substrate. Residues 8–9 and His16 contribute to the ATP site; that span reads SF. Substrate is bound by residues Lys40, Leu74, and Arg88. ATP contacts are provided by residues 89–91, Glu99, and 123–129; these read GLR and WSFVSST.

This sequence belongs to the bacterial CoaD family. Homohexamer. The cofactor is Mg(2+).

Its subcellular location is the cytoplasm. It carries out the reaction (R)-4'-phosphopantetheine + ATP + H(+) = 3'-dephospho-CoA + diphosphate. It participates in cofactor biosynthesis; coenzyme A biosynthesis; CoA from (R)-pantothenate: step 4/5. Reversibly transfers an adenylyl group from ATP to 4'-phosphopantetheine, yielding dephospho-CoA (dPCoA) and pyrophosphate. The polypeptide is Phosphopantetheine adenylyltransferase (Deinococcus geothermalis (strain DSM 11300 / CIP 105573 / AG-3a)).